The primary structure comprises 378 residues: Homeobox protein Meis3 (378 aa).

The tract at residues 24–57 (FSEAAPSVPRAPGPYTPHRPPQLQAPGLDSDSLK) is disordered. Residues 32–43 (PRAPGPYTPHRP) are compositionally biased toward pro residues. One can recognise an MEIS N-terminal domain in the interval 99–182 (GGDVCSSDSF…PIDLVIEDRD (84 aa)). Positions 203-265 (NTTWIRDHED…DEDLDLERRR (63 aa)) are disordered. The segment covering 230-244 (SQSGDNSSDQGDGLD) has biased composition (low complexity). A DNA-binding region (homeobox; TALE-type) is located at residues 265-327 (RNKKRGIFPK…NARRRIVQPM (63 aa)).

Belongs to the TALE/MEIS homeobox family. Expressed at high levels in the brain. Significant expression also observed in the heart, spleen and lung. Expressed in pancreatic islets (beta-cells and non-beta-cells).

The protein localises to the nucleus. Its function is as follows. Transcriptional regulator which directly modulates PDPK1 expression, thus promoting survival of pancreatic beta-cells. Also regulates expression of NDFIP1, BNIP3, and CCNG1. The polypeptide is Homeobox protein Meis3 (Meis3) (Mus musculus (Mouse)).